We begin with the raw amino-acid sequence, 344 residues long: L-threonine 3-dehydrogenase (344 aa).

Cysteine 42 contacts Zn(2+). Residues threonine 44 and histidine 47 each act as charge relay system in the active site. Zn(2+)-binding residues include histidine 67, glutamate 68, cysteine 97, cysteine 100, cysteine 103, and cysteine 111. NAD(+) contacts are provided by residues isoleucine 179, aspartate 199, arginine 204, 266–268 (LGI), and 290–291 (IY).

The protein belongs to the zinc-containing alcohol dehydrogenase family. In terms of assembly, homotetramer. It depends on Zn(2+) as a cofactor.

The protein localises to the cytoplasm. The enzyme catalyses L-threonine + NAD(+) = (2S)-2-amino-3-oxobutanoate + NADH + H(+). It participates in amino-acid degradation; L-threonine degradation via oxydo-reductase pathway; glycine from L-threonine: step 1/2. Functionally, catalyzes the NAD(+)-dependent oxidation of L-threonine to 2-amino-3-ketobutyrate. In Chelativorans sp. (strain BNC1), this protein is L-threonine 3-dehydrogenase.